We begin with the raw amino-acid sequence, 628 residues long: Somatic embryogenesis receptor kinase 2 (628 aa).

The first 29 residues, 1 to 29 (MGRKKFEAFGFVCLISLLLLFNSLWLASS), serve as a signal peptide directing secretion. Residues 30–241 (NMEGDALHSL…PTPGGYSATG (212 aa)) are Extracellular-facing. The interval 45–85 (DPNNVLQSWDPTLVNPCTWFHVTCNNENSVIRVDLGNADLS) is PSKR1 binding. Positions 56–58 (TLV) are CLE44 binding. Cysteines 61 and 68 form a disulfide. Leucine-rich repeat receptor-like protein kinase binding regions lie at residues 62-81 (TWFH…DLGN) and 100-105 (YLELYS). 64–65 (FH) contacts brassinolide. LRR repeat units lie at residues 95 to 119 (LKNL…LGNL), 121 to 143 (NLVS…LGKL), 144 to 167 (FKLR…LTNI), and 168 to 192 (MTLQ…SFSL). 2 N-linked (GlcNAc...) asparagine glycosylation sites follow: asparagine 107 and asparagine 118. 2 leucine-rich repeat receptor-like protein kinase binding regions span residues 126–129 (DLYL) and 148–150 (FLR). Residues asparagine 153 and asparagine 187 are each glycosylated (N-linked (GlcNAc...) asparagine). A leucine-rich repeat receptor-like protein kinase binding region spans residues 174–197 (DLSNNRLSGSVPDNGSFSLFTPIS). Residues cysteine 205 and cysteine 213 are joined by a disulfide bond. The chain crosses the membrane as a helical span at residues 242 to 262 (AIAGGVAAGAALLFAAPALAF). The Cytoplasmic segment spans residues 263–628 (AWWRRRKPQE…LHAMELSGPR (366 aa)). Threonine 302 bears the Phosphothreonine mark. The Protein kinase domain maps to 305 to 592 (FSNKNILGRG…GLAEKWDEWQ (288 aa)). 311–319 (LGRGGFGKV) provides a ligand contact to ATP. Threonine 328 is subject to Phosphothreonine. Lysine 333 serves as a coordination point for ATP. Phosphoserine occurs at positions 386 and 389. Aspartate 432 acts as the Proton acceptor in catalysis. Threonine 462, threonine 465, threonine 466, and threonine 471 each carry phosphothreonine. Tyrosine 479 carries the post-translational modification Phosphotyrosine. Position 481 is a phosphoserine (serine 481). Threonine 482 bears the Phosphothreonine mark. At serine 486 the chain carries Phosphoserine. Threonine 562 is subject to Phosphothreonine. Serine 604 carries the phosphoserine modification. Residue threonine 616 is modified to Phosphothreonine. A Phosphoserine modification is found at serine 625.

This sequence belongs to the protein kinase superfamily. Ser/Thr protein kinase family. As to quaternary structure, homo- and heterodimer. Component of the SERK1 signaling complex, composed of KAPP, CDC48A, GRF6 or GRF7, SERK1, SERK2, SERK3/BAK1 and BRI1. Bind to BRI1 in a brassinolide-dependent manner. Heterodimer with PSKR1. Interacts with the EF-Tu receptor EFR and FLS2 in a specific ligand-induced manner. Interacts with ERECTA in a EPF2-induced manner. Interacts with ERL1 in a EPF1-induced manner. Interacts with TMM. In the presence of the signal peptide RGF1, interacts with RGI3/RGFR1 and RGI4/RGFR2/SKM2. Binds to the peptide CLE44 in the presence of TDR. Autophosphorylated. Expressed in flowers, tapetum, developing microspores, all cells of the embryo sac, provascular strands and developing vascular bundles. Low expression in adult vascular tissue.

Its subcellular location is the cell membrane. It carries out the reaction L-seryl-[protein] + ATP = O-phospho-L-seryl-[protein] + ADP + H(+). The catalysed reaction is L-threonyl-[protein] + ATP = O-phospho-L-threonyl-[protein] + ADP + H(+). Serine/threonine-kinase involved in brassinosteroid-dependent and -independent signaling pathways. Acts redundantly with SERK1 as a control point for sporophytic development controlling male gametophyte production. Serves as coreceptor to small peptide (e.g. RGF1 and CLE44) signaling. Involved in the perception of phytosulfokine and subsequent signal transduction. The sequence is that of Somatic embryogenesis receptor kinase 2 from Arabidopsis thaliana (Mouse-ear cress).